Here is a 175-residue protein sequence, read N- to C-terminus: B9 domain-containing protein 2 (175 aa).

In terms of domain architecture, C2 B9-type spans 2–118; that stretch reads AELHIIGQII…QCVTWRPLGS (117 aa).

This sequence belongs to the B9D family. As to quaternary structure, part of the tectonic-like complex (also named B9 complex).

The protein resides in the cytoplasm. The protein localises to the cytoskeleton. It localises to the cilium basal body. Its subcellular location is the cilium axoneme. Component of the tectonic-like complex, a complex localized at the transition zone of primary cilia and acting as a barrier that prevents diffusion of transmembrane proteins between the cilia and plasma membranes. The chain is B9 domain-containing protein 2 (b9d2) from Danio rerio (Zebrafish).